A 163-amino-acid polypeptide reads, in one-letter code: Transcription elongation factor GreA (163 aa).

Residues 12-73 (YEKIQKEFEA…ELSDLLARAQ (62 aa)) are a coiled coil.

This sequence belongs to the GreA/GreB family.

Necessary for efficient RNA polymerase transcription elongation past template-encoded arresting sites. The arresting sites in DNA have the property of trapping a certain fraction of elongating RNA polymerases that pass through, resulting in locked ternary complexes. Cleavage of the nascent transcript by cleavage factors such as GreA or GreB allows the resumption of elongation from the new 3'terminus. GreA releases sequences of 2 to 3 nucleotides. This chain is Transcription elongation factor GreA, found in Nitratiruptor sp. (strain SB155-2).